We begin with the raw amino-acid sequence, 470 residues long: MNTGHITQVMGPVVDVKFKSGQLPEINNALKVVQVGADKNAVDVTVTLEVALHLGDDSVRTVAMGSTDGLVRGTEALDTGAPISVPVGEATLGRVFNVLGEAIDLGEPVAADVKRDPIHREAPKFEELSTTTEILETGIKVVDLLAPYIKGGKIGLFGGAGVGKTVLIQELINNIAQEHGGISVFAGVGERTREGNDLYHEMTDSGVIKKTAMVFGQMNEPPGARMRVALSGLTMAEHFRDRDGQDVLLFVDNIFRFTQAGSEVSALLGRMPSAVGYQPTLATEMGQLQERITSTKVGSVTSIQAIYVPADDYTDPAPATTFAHLDATTNLERKLSEMGIYPAVDPLASTSRALSPEIVGEEHYSVARQVQQTLQKYKELQDIIAILGMDELSEEDKLVVHRARRIQFFLSQNFHVAEQFTGQKGSYVPVKETIKGFKEILDGKYDDLPEDAFRLVGRIEEVIEKGKQMA.

158-165 (GGAGVGKT) provides a ligand contact to ATP.

Belongs to the ATPase alpha/beta chains family. As to quaternary structure, F-type ATPases have 2 components, CF(1) - the catalytic core - and CF(0) - the membrane proton channel. CF(1) has five subunits: alpha(3), beta(3), gamma(1), delta(1), epsilon(1). CF(0) has three main subunits: a(1), b(2) and c(9-12). The alpha and beta chains form an alternating ring which encloses part of the gamma chain. CF(1) is attached to CF(0) by a central stalk formed by the gamma and epsilon chains, while a peripheral stalk is formed by the delta and b chains.

It is found in the cell membrane. It carries out the reaction ATP + H2O + 4 H(+)(in) = ADP + phosphate + 5 H(+)(out). Produces ATP from ADP in the presence of a proton gradient across the membrane. The catalytic sites are hosted primarily by the beta subunits. This is ATP synthase subunit beta from Alkalihalophilus pseudofirmus (strain ATCC BAA-2126 / JCM 17055 / OF4) (Bacillus pseudofirmus).